The chain runs to 262 residues: Serine O-acetyltransferase (262 aa).

Catalysis depends on C107, which acts as the Acyl-thioester intermediate. K128 is a binding site for substrate. H200 serves as the catalytic Proton acceptor. E202 is a catalytic residue. Residue R214 participates in substrate binding.

Belongs to the MetA family.

It is found in the cytoplasm. The enzyme catalyses L-serine + acetyl-CoA = O-acetyl-L-serine + CoA. It carries out the reaction L-homoserine + acetyl-CoA = O-acetyl-L-homoserine + CoA. Its pathway is amino-acid biosynthesis; L-cysteine biosynthesis; L-cysteine from L-serine: step 1/2. Its function is as follows. Transfers an acetyl group from acetyl-CoA to L-serine, forming acetyl-L-serine. In vitro, also has homoserine acetyl transferase activity. The polypeptide is Serine O-acetyltransferase (Lactobacillus acidophilus).